Here is a 563-residue protein sequence, read N- to C-terminus: Tripeptidyl-peptidase 1 (563 aa).

Positions 1 to 19 (MGLQACLLGLFALILSGKC) are cleaved as a signal peptide. Residues 20–195 (SYSPEPDQRR…PEPQVTGTVG (176 aa)) constitute a propeptide, removed in mature form. An intrachain disulfide couples Cys111 to Cys122. In terms of domain architecture, Peptidase S53 spans 199–563 (GVTPSVIRKR…PALLKTLLNP (365 aa)). Asn210 and Asn222 each carry an N-linked (GlcNAc...) asparagine glycan. Residues Glu272 and Asp276 each act as charge relay system in the active site. 3 N-linked (GlcNAc...) asparagine glycosylation sites follow: Asn286, Asn313, and Asn443. Cystine bridges form between Cys365–Cys526 and Cys522–Cys537. Ser475 serves as the catalytic Charge relay system. Ca(2+)-binding residues include Asp517 and Val518. Gly539, Gly541, and Asp543 together coordinate Ca(2+).

As to quaternary structure, monomer. Interacts with CLN5. Interacts with CLN3. Ca(2+) is required as a cofactor. Activated by autocatalytic proteolytical processing upon acidification. N-glycosylation is required for processing and activity. As to expression, detected in all tissues examined with highest levels in heart and placenta and relatively similar levels in other tissues.

It localises to the lysosome. The protein resides in the melanosome. It carries out the reaction Release of an N-terminal tripeptide from a polypeptide, but also has endopeptidase activity.. Inhibited by diisopropyl fluorophosphate (DFP). Lysosomal serine protease with tripeptidyl-peptidase I activity. May act as a non-specific lysosomal peptidase which generates tripeptides from the breakdown products produced by lysosomal proteinases. Requires substrates with an unsubstituted N-terminus. The protein is Tripeptidyl-peptidase 1 (TPP1) of Homo sapiens (Human).